A 958-amino-acid chain; its full sequence is Dermatan-sulfate epimerase (958 aa).

A signal peptide spans Met1–Ala22. The Lumenal segment spans residues Tyr23 to Arg902. N-linked (GlcNAc...) (complex) asparagine glycosylation is present at Asn183. The Proton donor role is filled by His205. Tyr261 is an active-site residue. The N-linked (GlcNAc...) (high mannose) asparagine glycan is linked to Asn336. N-linked (GlcNAc...) (complex) asparagine glycosylation is present at Asn411. Residues His452 and Glu470 each contribute to the Mn(2+) site. Residue Tyr473 is part of the active site. Position 481 (Asn481) interacts with Mn(2+). N-linked (GlcNAc...) (complex) asparagine glycosylation occurs at Asn642. N-linked (GlcNAc...) (paucimannose) asparagine glycosylation is present at Asn648. Residues Leu903–Phe923 traverse the membrane as a helical segment. Over Gln924–Arg933 the chain is Cytoplasmic. Residues Cys934 to Ser954 traverse the membrane as a helical segment. The Lumenal segment spans residues Gln955–Cys958.

Belongs to the dermatan-sulfate isomerase family. It depends on Mn(2+) as a cofactor. N-glycosylated. Glycosylation is important for enzymatic activity. In terms of tissue distribution, ubiquitously expressed with higher expression in kidney and ovary and lower expression in brain, colon and thymus. Also expressed in renal cell carcinomas, brain tumors, and in a part of melanomas and adenocarcinomas from organs other than the breast. Expressed in squamous cell carcinomas (SCC), glioma, and some adenocarcinoma cell lines, but not in breast cancer cell lines or any normal tissues (at protein level).

The protein localises to the endoplasmic reticulum membrane. It localises to the golgi apparatus membrane. Its subcellular location is the cytoplasmic vesicle membrane. It is found in the microsome membrane. It carries out the reaction chondroitin 4'-sulfate = dermatan 4'-sulfate. It functions in the pathway glycan metabolism; chondroitin sulfate biosynthesis. Its pathway is glycan metabolism; heparan sulfate biosynthesis. Its function is as follows. Converts D-glucuronic acid to L-iduronic acid (IdoUA) residues. Plays an important role in the biosynthesis of the glycosaminoglycan/mucopolysaccharide dermatan sulfate. The sequence is that of Dermatan-sulfate epimerase (DSE) from Homo sapiens (Human).